We begin with the raw amino-acid sequence, 382 residues long: Apolipoprotein A-IV (382 aa).

The N-terminal stretch at 1-20 (MFLKAVVLTLSLVAVTGAQA) is a signal peptide. 13 consecutive repeat copies span residues 33–54 (DYFS…KSEL), 60–81 (ALFQ…KKLV), 82–103 (SFAM…EEIR), 115–136 (PHAD…QRLG), 137–158 (PYAE…NQLT), 159–180 (AHAQ…ASLT), 181–202 (PYAD…GHLT), 203–224 (PYAD…RSLA), 225–246 (PYAQ…FQMK), 247–268 (KNAE…QKLV), 269–286 (PVAE…EELQ), 287–308 (KSLA…RNMG), and 309–330 (PYGE…QKLG). Residues 33–330 (DYFSQLSNNA…QVEELRQKLG (298 aa)) form a 13 X 22 AA approximate tandem repeats region.

It belongs to the apolipoprotein A1/A4/E family. In terms of assembly, homodimer. In terms of processing, phosphorylation sites are present in the extracellular medium.

It localises to the secreted. May have a role in chylomicrons and VLDL secretion and catabolism. Required for efficient activation of lipoprotein lipase by ApoC-II; potent activator of LCAT. Apoa-IV is a major component of HDL and chylomicrons. The protein is Apolipoprotein A-IV (APOA4) of Mirounga angustirostris (Northern elephant seal).